Reading from the N-terminus, the 429-residue chain is Histidine--tRNA ligase (429 aa).

The protein belongs to the class-II aminoacyl-tRNA synthetase family. As to quaternary structure, homodimer.

It is found in the cytoplasm. It carries out the reaction tRNA(His) + L-histidine + ATP = L-histidyl-tRNA(His) + AMP + diphosphate + H(+). In Streptococcus mutans serotype c (strain ATCC 700610 / UA159), this protein is Histidine--tRNA ligase.